The chain runs to 144 residues: MAFDKLGRFFGISEDDEMNEVPYTESEEQQEEIPQTQKNERRANVVSINSGVSATSKIVLYEPRVYSDAKEVAQNLLNNKAVIINFARMDDEQARRIVDFITGTVYALNGEIQRVGDKIFLATPPKFETDGKIAELVEKKDKMD.

Acidic residues predominate over residues 14-31; it reads EDDEMNEVPYTESEEQQE. Residues 14-41 are disordered; it reads EDDEMNEVPYTESEEQQEEIPQTQKNER.

This sequence belongs to the SepF family. As to quaternary structure, homodimer. Interacts with FtsZ.

Its subcellular location is the cytoplasm. Its function is as follows. Cell division protein that is part of the divisome complex and is recruited early to the Z-ring. Probably stimulates Z-ring formation, perhaps through the cross-linking of FtsZ protofilaments. Its function overlaps with FtsA. The polypeptide is Cell division protein SepF (Lactobacillus johnsonii (strain CNCM I-12250 / La1 / NCC 533)).